The primary structure comprises 1381 residues: DNA-directed RNA polymerase subunit beta'' (1381 aa).

4 residues coordinate Zn(2+): Cys224, Cys296, Cys303, and Cys306.

Belongs to the RNA polymerase beta' chain family. RpoC2 subfamily. In plastids the minimal PEP RNA polymerase catalytic core is composed of four subunits: alpha, beta, beta', and beta''. When a (nuclear-encoded) sigma factor is associated with the core the holoenzyme is formed, which can initiate transcription. It depends on Zn(2+) as a cofactor.

It localises to the plastid. Its subcellular location is the chloroplast. The catalysed reaction is RNA(n) + a ribonucleoside 5'-triphosphate = RNA(n+1) + diphosphate. Functionally, DNA-dependent RNA polymerase catalyzes the transcription of DNA into RNA using the four ribonucleoside triphosphates as substrates. The polypeptide is DNA-directed RNA polymerase subunit beta'' (Drimys granadensis).